Here is a 146-residue protein sequence, read N- to C-terminus: Protein LDOC1 (146 aa).

This sequence belongs to the LDOC1 family. In terms of assembly, interacts with NOD2. Ubiquitously expressed with high levels in brain ant thyroid and low expression in placenta, liver and leukocytes. Expressed as well in six of the seven human breast cancer cell lines examined.

The protein resides in the nucleus. Functionally, may have an important role in the development and/or progression of some cancers. In Homo sapiens (Human), this protein is Protein LDOC1 (LDOC1).